We begin with the raw amino-acid sequence, 151 residues long: MGRMHSRGKGISASALPYKRSSPSWLKTTSQDVDESICKFAKKGLTPSQIGVILRDSHGIPQVKSVTGSKILRILKAHGLAPEIPEDLYHLIKKAVAIRKHLERNRKDKDSKFRLILVESRIHRLARYYKKTKKLPPVWKYESTTASTLVA.

It belongs to the universal ribosomal protein uS15 family.

This Arabidopsis thaliana (Mouse-ear cress) protein is Small ribosomal subunit protein uS15y (RPS13B).